A 183-amino-acid chain; its full sequence is Translation initiation factor IF-3 (183 aa).

This sequence belongs to the IF-3 family. As to quaternary structure, monomer.

The protein localises to the cytoplasm. Functionally, IF-3 binds to the 30S ribosomal subunit and shifts the equilibrium between 70S ribosomes and their 50S and 30S subunits in favor of the free subunits, thus enhancing the availability of 30S subunits on which protein synthesis initiation begins. The polypeptide is Translation initiation factor IF-3 (Aliivibrio salmonicida (strain LFI1238) (Vibrio salmonicida (strain LFI1238))).